The following is a 639-amino-acid chain: Threonine--tRNA ligase (639 aa).

The 62-residue stretch at 1–62 (MYQLTLPDKS…ETDANIEVLT (62 aa)) folds into the TGS domain. The interval 246-537 (DHRKIGKELD…LIEHYEGKFP (292 aa)) is catalytic. Positions 337, 388, and 514 each coordinate Zn(2+).

Belongs to the class-II aminoacyl-tRNA synthetase family. In terms of assembly, homodimer. It depends on Zn(2+) as a cofactor.

It is found in the cytoplasm. It catalyses the reaction tRNA(Thr) + L-threonine + ATP = L-threonyl-tRNA(Thr) + AMP + diphosphate + H(+). Its function is as follows. Catalyzes the attachment of threonine to tRNA(Thr) in a two-step reaction: L-threonine is first activated by ATP to form Thr-AMP and then transferred to the acceptor end of tRNA(Thr). Also edits incorrectly charged L-seryl-tRNA(Thr). The sequence is that of Threonine--tRNA ligase from Leptospira borgpetersenii serovar Hardjo-bovis (strain JB197).